The chain runs to 655 residues: T-lymphocyte surface antigen Ly-9 (655 aa).

Residues 1–47 (MVAPKSHTDDWAPGPFSSKPQRSQLQIFSSVLQTSLLFLLMGLRASG) form the signal peptide. In terms of domain architecture, Ig-like V-type 1 spans 48 to 158 (KDSAPTVVSG…FVYEQLQEPQ (111 aa)). At 48–454 (KDSAPTVVSG…ICSGPERNTK (407 aa)) the chain is on the extracellular side. Residues Asn68, Asn95, Asn120, Asn169, and Asn173 are each glycosylated (N-linked (GlcNAc...) asparagine). Positions 159 to 235 (VTMKSVKVSE…NPVSQRSSLP (77 aa)) constitute an Ig-like C2-type 1 domain. 2 disulfide bridges follow: Cys172/Cys242 and Cys178/Cys222. The region spanning 251–363 (GTTGETVVGV…LLIYRRLRKP (113 aa)) is the Ig-like V-type 2 domain. Asn285, Asn413, and Asn424 each carry an N-linked (GlcNAc...) asparagine glycan. An Ig-like C2-type 2 domain is found at 364–452 (KITWSLRHSE…ENICSGPERN (89 aa)). 2 cysteine pairs are disulfide-bonded: Cys377–Cys446 and Cys383–Cys427. The helical transmembrane segment at 455–476 (LWIGLFLMVCLLCVGIFSWCIW) threads the bilayer. The Cytoplasmic portion of the chain corresponds to 477-655 (KRKGRCSVPA…PESPTYENFT (179 aa)). Positions 521–556 (PLRPARQQPTPTSDSSSDSNLTTEEDEDRPEVHKPI) are disordered. Residues 530-542 (TPTSDSSSDSNLT) show a composition bias toward low complexity. 2 consecutive short sequence motifs (ITSM) follow at residues 601–606 (TMYAQV) and 624–629 (TIYCSI). Phosphotyrosine is present on Tyr603. A disordered region spans residues 633–655 (QVVPPPQQNDLEIPESPTYENFT).

In terms of assembly, interacts with SH2D1A, SH2D1B and INPP5D. Interacts (via phosphorylated cytoplasmic domain) with PTPN11; the interaction is blocked by SH2D1A. Increased surface expression on T-cells of systemic lupus erythematosus (SLE) patients.

It localises to the membrane. It is found in the cell membrane. Functionally, self-ligand receptor of the signaling lymphocytic activation molecule (SLAM) family. SLAM receptors triggered by homo- or heterotypic cell-cell interactions are modulating the activation and differentiation of a wide variety of immune cells and thus are involved in the regulation and interconnection of both innate and adaptive immune response. Activities are controlled by presence or absence of small cytoplasmic adapter proteins, SH2D1A/SAP and/or SH2D1B/EAT-2. May participate in adhesion reactions between T lymphocytes and accessory cells by homophilic interaction. Promotes T-cell differentiation into a helper T-cell Th17 phenotype leading to increased IL-17 secretion; the costimulatory activity requires SH2D1A. Promotes recruitment of RORC to the IL-17 promoter. May be involved in the maintenance of peripheral cell tolerance by serving as a negative regulator of the immune response. May disable autoantibody responses and inhibit IFN-gamma secretion by CD4(+) T-cells. May negatively regulate the size of thymic innate CD8(+) T-cells and the development of invariant natural killer T (iNKT) cells. The polypeptide is T-lymphocyte surface antigen Ly-9 (LY9) (Homo sapiens (Human)).